A 209-amino-acid chain; its full sequence is Type III pantothenate kinase (209 aa).

5–12 (DIGNSNAN) serves as a coordination point for ATP. Substrate contacts are provided by residues Y68 and 72 to 75 (GIDR). D74 functions as the Proton acceptor in the catalytic mechanism. A K(+)-binding site is contributed by D89. S92 contributes to the ATP binding site. Residue T144 coordinates substrate.

The protein belongs to the type III pantothenate kinase family. As to quaternary structure, homodimer. NH4(+) is required as a cofactor. K(+) serves as cofactor.

It localises to the cytoplasm. It catalyses the reaction (R)-pantothenate + ATP = (R)-4'-phosphopantothenate + ADP + H(+). Its pathway is cofactor biosynthesis; coenzyme A biosynthesis; CoA from (R)-pantothenate: step 1/5. Functionally, catalyzes the phosphorylation of pantothenate (Pan), the first step in CoA biosynthesis. In Campylobacter jejuni subsp. jejuni serotype O:2 (strain ATCC 700819 / NCTC 11168), this protein is Type III pantothenate kinase.